A 509-amino-acid chain; its full sequence is MEAIISFAGIGINYKKLQSKLQHDVGRFLRALTITARALPGQPKHIAIRQETAFTLQGEYIYFPILLRKQFEMFNMVYTAHPVSLRALPCVETEFPLFNYQQEMVDKIHKKLLSPYGRFYLHLNTGLGKTRIAISIIQKLLYPTLVIVPTKAIQIQWIDELKLLLPHLRVAAYNNAACKKKDITSKEYDVIVGIINTLRKKPEPFFEPFGLVVLDEAHELHSPENYKIFWKIQLSRILGLSATPLDRPDGMDKIILHHLGQPQRTVSPTTTFSGYVREIEYQGHPDFVKPVCINEKVSAIATIDKLLQDPSRIQLVVNETKRLYSLHTAEPQKWGTNEPYGIIIFVEFRKLLEIFYQALSEEFKDVQIIVPEVALLCGGVSNTALSQAHSASIILLTYGYGRRGISFKHMTSIIMATPRRNNMEQILGRITRQGSDEKKVRIVVDIKDTLSPLSSQVYDRHRIYKKKGYPIFKCSASYQQPYSSNEVLIWDPYNESCLASTTTPPSPSK.

The 153-residue stretch at 110–262 (KKLLSPYGRF…KIILHHLGQP (153 aa)) folds into the Helicase ATP-binding domain. 123–130 (LNTGLGKT) contacts ATP. A DEAH box motif is present at residues 215-218 (DEAH).

It belongs to the DEAD box helicase family. DEAH subfamily.

The catalysed reaction is ATP + H2O = ADP + phosphate + H(+). This is Putative ATP-dependent RNA helicase QP509L from Ornithodoros (relapsing fever ticks).